The sequence spans 333 residues: Forkhead box protein unc-130 (333 aa).

The interval 1–126 (MLFSMESILS…MSGHRKSSHA (126 aa)) is disordered. Residues 14 to 24 (PKLEPPPKLEP) show a composition bias toward basic and acidic residues. Over residues 37–50 (RSNTRLSEPSTSAS) the composition is skewed to polar residues. Positions 52-62 (LEHDLKFGESR) are enriched in basic and acidic residues. Residues 98 to 110 (SSDDAKDDDDDDD) show a composition bias toward acidic residues. The segment at residues 127–221 (KPPYSYIALI…DNGSFLRRRK (95 aa)) is a DNA-binding region (fork-head). Positions 304-333 (APVSSGQKRTSSSSSPNENGSSAVSDKLSA) are disordered. Residues 307–333 (SSGQKRTSSSSSPNENGSSAVSDKLSA) are compositionally biased toward low complexity.

Expressed in ventral body wall muscle. Expressed in the structural cells and two neurons of each ray in the male tail.

The protein resides in the nucleus. Probable transcription factor. Binds to DNA sequence motif 5'-CTGTTTCA-3'. Required for the migration of distal tip cells (DTC) and axonal growth-cones along the dorsal-ventral axis of the body wall, acting by cell autonomous repression of unc-129/TGF-beta expression in ventral body muscle during embyogenesis. Binds to the promoter region of the unc-129 gene. Plays a role in dorsal-ventral patterning and fate specification of the postembryonic mesoderm. Involved in male tail morphogenesis and in embryogenesis. Plays a role in the development of sensory neurons and is required to repress AWA fate and promote ASG fate in the ASG chemosensory neurons. Regulates expression of a class of small RNAs, known as 21U-RNAs. This Caenorhabditis elegans protein is Forkhead box protein unc-130.